Consider the following 609-residue polypeptide: Forkhead box protein O (609 aa).

2 disordered regions span residues 1 to 89 and 181 to 263; these read MDGF…KNSS and KSVR…SSCG. The residue at position 43 (Thr43) is a Phosphothreonine; by PKB/AKT1. Positions 62 to 79 are enriched in polar residues; that stretch reads TKASNQQLASGDPQQAMQ. Residues 80 to 89 show a composition bias toward low complexity; that stretch reads NANAAKKNSS. Positions 94–200 form a DNA-binding region, fork-head; it reads WGNLSYADLI…ETSRYEKRRG (107 aa). Ser189 is subject to Phosphoserine; by PKB/AKT1. Polar residues-rich tracts occupy residues 220-229 and 254-263; these read ATPSPSSSVS and RASSNASSCG. At Ser257 the chain carries Phosphoserine; by PKB/AKT1. Ser260, Ser261, and Ser266 each carry phosphoserine. 2 disordered regions span residues 321 to 365 and 384 to 411; these read AASG…QGQG and RDGL…DSLN. Residues 327–339 show a composition bias toward pro residues; sequence TQPPPPYQPPQQP. Residues 388–397 are compositionally biased toward polar residues; the sequence is SPNSVTTTMS.

In terms of assembly, interacts with melt.

It localises to the cytoplasm. It is found in the nucleus. Its function is as follows. Transcription factor involved in the regulation of the insulin signaling pathway. Consistently activates both the downstream target Thor\d4EBP and the feedback control target InR. Involved in negative regulation of the cell cycle, modulating cell growth and proliferation. In response to cellular stresses, such as nutrient deprivation or increased levels of reactive oxygen species, foxo is activated and inhibits growth through the action of target genes such as Thor. Foxo activated in the adult fat body can regulate lifespan in adults; an insulin peptide itself may function as one secondary messenger of insulin-regulated aging. Also regulates Lip4, homolog of human acid lipases, thereby acting as a key modulator of lipid metabolism by insulin signaling and integrates insulin responses to glucose and lipid homeostasis. The chain is Forkhead box protein O from Drosophila virilis (Fruit fly).